The following is a 753-amino-acid chain: Probable dipeptidyl peptidase 4 (753 aa).

Residues 1-18 (MKTSQFLSLLLLAGIAQA) form the signal peptide. 3 N-linked (GlcNAc...) asparagine glycosylation sites follow: N84, N114, and N222. Catalysis depends on charge relay system residues S616, D668, and H703.

This sequence belongs to the peptidase S9B family.

Its subcellular location is the secreted. The catalysed reaction is Release of an N-terminal dipeptide, Xaa-Yaa-|-Zaa-, from a polypeptide, preferentially when Yaa is Pro, provided Zaa is neither Pro nor hydroxyproline.. Extracellular dipeptidyl-peptidase which removes N-terminal dipeptides sequentially from polypeptides having unsubstituted N-termini provided that the penultimate residue is proline. Contributes to pathogenicity. In Trichophyton verrucosum (strain HKI 0517), this protein is Probable dipeptidyl peptidase 4 (DPP4).